A 98-amino-acid polypeptide reads, in one-letter code: MAVDNLQYEGEDLLLRLVLQPKSSRDQFIGLLGDELKIAITAPPVDGKANAHLIKFLSKQFKVAKGAIIIEKGLLSRHKRVRVCAPKKMPEFFNSLNE.

It belongs to the UPF0235 family.

The sequence is that of UPF0235 protein Ping_3043 from Psychromonas ingrahamii (strain DSM 17664 / CCUG 51855 / 37).